The chain runs to 1485 residues: Dicer-like protein 2 (1485 aa).

Low complexity predominate over residues M1–S11. Residues M1–R61 are disordered. Positions M72–S250 constitute a Helicase ATP-binding domain. M85–T92 is a binding site for ATP. The DEAH box motif lies at D193–H196. One can recognise a Helicase C-terminal domain in the interval K415–D579. Positions A609–D712 constitute a Dicer dsRNA-binding fold domain. RNase III domains follow at residues A988 to G1127 and L1168 to G1358. E1208, D1344, and E1347 together coordinate Mg(2+). Positions H1388 to E1469 constitute a DRBM domain.

This sequence belongs to the helicase family. Dicer subfamily. The cofactor is Mg(2+). Requires Mn(2+) as cofactor.

Dicer-like endonuclease involved in cleaving double-stranded RNA in the RNA interference (RNAi) pathway. Produces 21 to 25 bp dsRNAs (siRNAs) which target the selective destruction of homologous RNAs leading to sequence-specific suppression of gene expression, called post-transcriptional gene silencing (PTGS). Part of a broad host defense response against viral infection and transposons. In Pyricularia oryzae (strain 70-15 / ATCC MYA-4617 / FGSC 8958) (Rice blast fungus), this protein is Dicer-like protein 2 (DCL2).